The primary structure comprises 378 residues: O-methyltransferase gsfD (378 aa).

S-adenosyl-L-methionine is bound by residues 219–220, Asp244, 266–267, and Arg282; these read GG and DM. Residue His286 is the Proton acceptor of the active site.

This sequence belongs to the class I-like SAM-binding methyltransferase superfamily. Cation-independent O-methyltransferase family.

The enzyme catalyses desmethyl-dehydrogriseofulvin + S-adenosyl-L-methionine = dehydrogriseofulvin + S-adenosyl-L-homocysteine + H(+). Its pathway is secondary metabolite biosynthesis; terpenoid biosynthesis. O-methyltransferase; part of the gene cluster that mediates the biosynthesis of griseofulvin, an important antifungal drug that has been in use for a long time for treating dermatophyte infections. The first step of the pathway is the formation of the heptaketide backbone by gsfA which is initiated by priming with acetyl-CoA, followed by sequential condensations of 6 malonyl-CoA units. The resulting benzophenone can undergo a spontaneous dehydration to form norlichexanthone. However, the true precursor for the griseofulvin biosynthesis is not norlichexanthone, but the heptaketide benzophenone that is O-methylated at 3-OH by gsfB to produce griseophenone D which is further methylated at 9-OH by gsfC to yield griseophenone C. Griseophenone C is then substrate of halogenase gsfI which is responsible for the regio-specific chlorination at the C13 position to form griseophenone B. The cytochrome P450 gsfF catalyzes the coupling of orcinol and phloroglucinol rings in griseophenone B to form desmethyl-dehydrogriseofulvin A which is further methylated at 5-OH by gsfD to yield dehydrogriseofulvin. Finally, gsfE performs stereospecific reduction of enone 18 of dehydrogriseofulvin to afford the final product griseofulvin. The sequence is that of O-methyltransferase gsfD from Penicillium aethiopicum.